The sequence spans 1483 residues: ABC multidrug transporter atrA (1483 aa).

Positions 1–19 (MASHKKSEDPLVVKDRQEQ) are enriched in basic and acidic residues. The segment at 1 to 92 (MASHKKSEDP…NDPAVDPQGP (92 aa)) is disordered. The N-linked (GlcNAc...) asparagine glycan is linked to Asn-32. Residues 71–82 (PTRTSTLATISE) show a composition bias toward polar residues. N-linked (GlcNAc...) asparagine glycans are attached at residues Asn-123 and Asn-322. In terms of domain architecture, ABC transporter 1 spans 147–398 (FRIGEMMKNR…FERQGWECPQ (252 aa)). Helical transmembrane passes span 512–532 (TVSTVISQIIMALIIGSVFYG), 539–559 (GFTAKGATLFFAVLLNALIAM), 595–615 (IPVKFVIAVVFNLILYFLAGL), 620–640 (GQFFLYLLVTFIVMFVMSAVF), and 654–674 (MGLAGILILALIVYTGFVLPV). An N-linked (GlcNAc...) asparagine glycan is attached at Asn-718. The helical transmembrane segment at 759 to 779 (FGILIAFLVGFMMIYFIATEL) threads the bilayer. The N-linked (GlcNAc...) asparagine glycan is linked to Asn-780. The ABC transporter 2 domain maps to 840 to 1083 (FTWRDVCYDI…LLNYFESNGA (244 aa)). Residue 876–883 (GVSGAGKT) participates in ATP binding. N-linked (GlcNAc...) asparagine glycosylation is found at Asn-947 and Asn-1146. 5 consecutive transmembrane segments (helical) span residues 1179–1199 (YIASKWVLGILSGLFIGFSFF), 1215–1235 (LFMLCSIFSSLVQQVMPLFVT), 1254–1274 (AFLIANIIVEIPYQIMMGILT), 1293–1313 (LVLLLCIQFFIYASTFAHMAI), and 1320–1340 (ETASAIVVLLFAMSLTFCGVM). Asn-1413 carries an N-linked (GlcNAc...) asparagine glycan. The chain crosses the membrane as a helical span at residues 1444-1464 (FGLMWVYIVFNIFLATMLYYT). Asn-1471 is a glycosylation site (N-linked (GlcNAc...) asparagine).

The protein belongs to the ABC transporter superfamily. ABCG family. PDR (TC 3.A.1.205) subfamily.

The protein resides in the cell membrane. It catalyses the reaction (R)-miconazole(in) + ATP + H2O = (R)-miconazole(out) + ADP + phosphate + H(+). Its function is as follows. Pleiotropic ABC efflux transporter involved in the basal level of azole susceptibility. Confers resistance to miconazole and clotrimazole. This Aspergillus oryzae (strain ATCC 42149 / RIB 40) (Yellow koji mold) protein is ABC multidrug transporter atrA.